Consider the following 442-residue polypeptide: Tryptophan synthase beta chain 2 (442 aa).

N6-(pyridoxal phosphate)lysine is present on Lys-122.

This sequence belongs to the TrpB family. In terms of assembly, tetramer of two alpha and two beta chains. Pyridoxal 5'-phosphate serves as cofactor.

The enzyme catalyses (1S,2R)-1-C-(indol-3-yl)glycerol 3-phosphate + L-serine = D-glyceraldehyde 3-phosphate + L-tryptophan + H2O. Its pathway is amino-acid biosynthesis; L-tryptophan biosynthesis; L-tryptophan from chorismate: step 5/5. Functionally, the beta subunit is responsible for the synthesis of L-tryptophan from indole and L-serine. This chain is Tryptophan synthase beta chain 2 (trpB2), found in Methanosarcina acetivorans (strain ATCC 35395 / DSM 2834 / JCM 12185 / C2A).